Here is a 704-residue protein sequence, read N- to C-terminus: Mannan-binding lectin serine protease 1 (704 aa).

Positions 1–24 are cleaved as a signal peptide; it reads MRFLSFRRLLLYHVLCLTLTEVSA. A CUB 1 domain is found at 25 to 143; sequence HTVELNEMFG…TGFDAHYMAV (119 aa). A homodimerization region spans residues 25-189; sequence HTVELNEMFG…HTDNRTCRVE (165 aa). The tract at residues 25–189 is interaction with MBL2; the sequence is HTVELNEMFG…HTDNRTCRVE (165 aa). Positions 25–283 are interaction with FCN2; sequence HTVELNEMFG…STQSHSIQIL (259 aa). The interval 25 to 305 is interaction with MBL1; that stretch reads HTVELNEMFG…RLSYRAAGNE (281 aa). Residue Asn-54 is glycosylated (N-linked (GlcNAc...) asparagine). Ca(2+) contacts are provided by Glu-73, Asp-81, Asp-126, Ser-128, Asp-144, Val-145, and Glu-147. Cys-78 and Cys-96 are disulfide-bonded. Positions 144 to 187 constitute an EGF-like; calcium-binding domain; that stretch reads DVDECKEREDEELSCDHYCHNYIGGYYCSCRFGYILHTDNRTCR. Intrachain disulfides connect Cys-148-Cys-162, Cys-158-Cys-171, Cys-173-Cys-186, and Cys-190-Cys-217. Ca(2+) is bound by residues Asn-164, Tyr-165, and Gly-168. (3R)-3-hydroxyasparagine is present on Asn-164. Residue Asn-183 is glycosylated (N-linked (GlcNAc...) asparagine). Positions 190 to 302 constitute a CUB 2 domain; that stretch reads CSGNLFTQRT…RGWRLSYRAA (113 aa). The Ca(2+) site is built by Glu-240, Asp-250, Asp-287, and Ser-289. A disulfide bridge connects residues Cys-247 and Cys-265. Sushi domains lie at 304 to 369 and 370 to 439; these read NECP…TCKI and VDCG…TCLP. Intrachain disulfides connect Cys-306–Cys-354, Cys-334–Cys-367, Cys-372–Cys-419, Cys-402–Cys-437, Cys-441–Cys-577, and Cys-480–Cys-496. N-linked (GlcNAc...) asparagine glycosylation is found at Asn-390 and Asn-412. Positions 454–701 constitute a Peptidase S1 domain; that stretch reads IFNGRPAQKG…NKDWIQRVTG (248 aa). His-495 functions as the Charge relay system in the catalytic mechanism. A glycan (N-linked (GlcNAc...) asparagine) is linked at Leu-538. Residue Asp-557 is the Charge relay system of the active site. An N-linked (GlcNAc...) asparagine glycan is attached at Glu-604. Disulfide bonds link Cys-619-Cys-636 and Cys-647-Cys-677. Ser-651 serves as the catalytic Charge relay system.

Belongs to the peptidase S1 family. In terms of assembly, homodimer. Interacts with the oligomeric lectins MBL2, FCN2 and FCN3; triggers the lectin pathway of complement through activation of C3. Interacts with SERPING1. Interacts with COLEC11; probably triggers the lectin pathway of complement. Post-translationally, the iron and 2-oxoglutarate dependent 3-hydroxylation of aspartate and asparagine is (R) stereospecific within EGF domains. In terms of processing, N-glycosylated. Some N-linked glycan are of the complex-type. Autoproteolytic processing of the proenzyme produces the active enzyme composed on the heavy and the light chain held together by a disulfide bond. Isoform 1 but not isoform 2 is activated through autoproteolytic processing. Protein of the plasma which is primarily expressed by liver.

The protein resides in the secreted. Inhibited by SERPING1 and A2M. Its function is as follows. Functions in the lectin pathway of complement, which performs a key role in innate immunity by recognizing pathogens through patterns of sugar moieties and neutralizing them. The lectin pathway is triggered upon binding of mannan-binding lectin (MBL) and ficolins to sugar moieties which leads to activation of the associated proteases MASP1 and MASP2. Functions as an endopeptidase and may activate MASP2 or C2 or directly activate C3 the key component of complement reaction. Isoform 2 may have an inhibitory effect on the activation of the lectin pathway of complement or may cleave IGFBP5. Also plays a role in development. The sequence is that of Mannan-binding lectin serine protease 1 (Masp1) from Rattus norvegicus (Rat).